Reading from the N-terminus, the 908-residue chain is 26S proteasome non-ATPase regulatory subunit 2 (908 aa).

Met1 bears the N-acetylmethionine mark. The disordered stretch occupies residues 1–51 (MEEGGRDKTPVQSQQPSATTPSGADEKSSGKERRDAGEKDKEQELSEEDKQ). Residues Thr9 and Thr20 each carry the phosphothreonine modification. Positions 10 to 22 (PVQSQQPSATTPS) are enriched in polar residues. A compositionally biased stretch (basic and acidic residues) spans 24–51 (ADEKSSGKERRDAGEKDKEQELSEEDKQ). 2 positions are modified to phosphoserine: Ser29 and Ser147. Position 194 is a phosphotyrosine (Tyr194). Phosphoserine is present on residues Ser361 and Ser363. PC repeat units follow at residues 409–442 (SAAA…YIKS), 443–479 (GALL…TMRL), 480–514 (GSIF…SMEV), 517–551 (VTAL…TELK), and 560–589 (LGLG…PFRS). At Lys551 the chain carries N6-acetyllysine. Residues 623–643 (KEKEEDKDKKEKKDKDKKEAP) show a composition bias toward basic and acidic residues. The interval 623–645 (KEKEEDKDKKEKKDKDKKEAPAD) is disordered. PC repeat units lie at residues 692 to 723 (LALA…EVSY) and 742 to 757 (AAML…KDPN). Positions 708 to 903 (DTLSKFSHDA…LEGFVILRKN (196 aa)) are required for interaction with UBLCP1.

This sequence belongs to the proteasome subunit S2 family. Component of the 19S proteasome regulatory particle complex. The 26S proteasome consists of a 20S core particle (CP) and two 19S regulatory subunits (RP). The regulatory particle is made of a lid composed of 9 subunits, a base containing 6 ATPases and few additional components including PSMD2. Interacts with RPGRIP1L. Interacts with CRY1 in a KDM8-dependent manner. Interacts (via C-terminus) with phosphatase UBLCP1 (via ubiquitin-like domain); the interaction recruits UBLCP1 to the 19S regulatory particle where it dephosphorylates 19S subunit PSMC2/RPT1 which impairs PSMC2 ATPase activity and disrupts 26S proteasome assembly.

In terms of biological role, component of the 26S proteasome, a multiprotein complex involved in the ATP-dependent degradation of ubiquitinated proteins. This complex plays a key role in the maintenance of protein homeostasis by removing misfolded or damaged proteins, which could impair cellular functions, and by removing proteins whose functions are no longer required. Therefore, the proteasome participates in numerous cellular processes, including cell cycle progression, apoptosis, or DNA damage repair. Its function is as follows. Binds to the intracellular domain of tumor necrosis factor type 1 receptor. The binding domain of TRAP1 and TRAP2 resides outside the death domain of TNFR1. This chain is 26S proteasome non-ATPase regulatory subunit 2 (Psmd2), found in Mus musculus (Mouse).